We begin with the raw amino-acid sequence, 566 residues long: Proline--tRNA ligase (566 aa).

Belongs to the class-II aminoacyl-tRNA synthetase family. ProS type 1 subfamily. In terms of assembly, homodimer.

It localises to the cytoplasm. The catalysed reaction is tRNA(Pro) + L-proline + ATP = L-prolyl-tRNA(Pro) + AMP + diphosphate. Functionally, catalyzes the attachment of proline to tRNA(Pro) in a two-step reaction: proline is first activated by ATP to form Pro-AMP and then transferred to the acceptor end of tRNA(Pro). As ProRS can inadvertently accommodate and process non-cognate amino acids such as alanine and cysteine, to avoid such errors it has two additional distinct editing activities against alanine. One activity is designated as 'pretransfer' editing and involves the tRNA(Pro)-independent hydrolysis of activated Ala-AMP. The other activity is designated 'posttransfer' editing and involves deacylation of mischarged Ala-tRNA(Pro). The misacylated Cys-tRNA(Pro) is not edited by ProRS. This is Proline--tRNA ligase from Bacillus cereus (strain Q1).